A 491-amino-acid chain; its full sequence is Bifunctional protein GlmU (491 aa).

The pyrophosphorylase stretch occupies residues 1 to 238; it reads MTTQPAVPAA…EWEIRGVNDR (238 aa). UDP-N-acetyl-alpha-D-glucosamine-binding positions include 14 to 17, K28, Q81, 86 to 87, 110 to 112, G149, E163, N178, and N236; these read LAAG, GT, and YGD. A Mg(2+)-binding site is contributed by D112. N236 serves as a coordination point for Mg(2+). A linker region spans residues 239–259; the sequence is AQLADLAAEANRRTLRRWMLA. Residues 260–491 form an N-acetyltransferase region; the sequence is GVTIADPATT…TASTDREIQP (232 aa). The UDP-N-acetyl-alpha-D-glucosamine site is built by R341 and K359. The active-site Proton acceptor is H371. Y374 and N385 together coordinate UDP-N-acetyl-alpha-D-glucosamine. Acetyl-CoA contacts are provided by residues A388, 394–395, S413, and A431; that span reads NY. The disordered stretch occupies residues 460-491; the sequence is AKRPGTPAAEAAQRANDESTGTTASTDREIQP.

This sequence in the N-terminal section; belongs to the N-acetylglucosamine-1-phosphate uridyltransferase family. The protein in the C-terminal section; belongs to the transferase hexapeptide repeat family. As to quaternary structure, homotrimer. Mg(2+) serves as cofactor.

It is found in the cytoplasm. It carries out the reaction alpha-D-glucosamine 1-phosphate + acetyl-CoA = N-acetyl-alpha-D-glucosamine 1-phosphate + CoA + H(+). The enzyme catalyses N-acetyl-alpha-D-glucosamine 1-phosphate + UTP + H(+) = UDP-N-acetyl-alpha-D-glucosamine + diphosphate. It functions in the pathway nucleotide-sugar biosynthesis; UDP-N-acetyl-alpha-D-glucosamine biosynthesis; N-acetyl-alpha-D-glucosamine 1-phosphate from alpha-D-glucosamine 6-phosphate (route II): step 2/2. It participates in nucleotide-sugar biosynthesis; UDP-N-acetyl-alpha-D-glucosamine biosynthesis; UDP-N-acetyl-alpha-D-glucosamine from N-acetyl-alpha-D-glucosamine 1-phosphate: step 1/1. The protein operates within bacterial outer membrane biogenesis; LPS lipid A biosynthesis. Functionally, catalyzes the last two sequential reactions in the de novo biosynthetic pathway for UDP-N-acetylglucosamine (UDP-GlcNAc). The C-terminal domain catalyzes the transfer of acetyl group from acetyl coenzyme A to glucosamine-1-phosphate (GlcN-1-P) to produce N-acetylglucosamine-1-phosphate (GlcNAc-1-P), which is converted into UDP-GlcNAc by the transfer of uridine 5-monophosphate (from uridine 5-triphosphate), a reaction catalyzed by the N-terminal domain. The protein is Bifunctional protein GlmU of Kineococcus radiotolerans (strain ATCC BAA-149 / DSM 14245 / SRS30216).